The chain runs to 262 residues: Pimeloyl-[acyl-carrier protein] methyl ester esterase (262 aa).

The region spanning 15–242 (HLVLLHGWGL…AAHAPFISHP (228 aa)) is the AB hydrolase-1 domain. Substrate-binding positions include W22, 82–83 (SL), and 143–147 (FLALQ). The active-site Nucleophile is S82. Residues D207 and H235 contribute to the active site. H235 provides a ligand contact to substrate.

Belongs to the AB hydrolase superfamily. Carboxylesterase BioH family. In terms of assembly, monomer.

The protein localises to the cytoplasm. The enzyme catalyses 6-carboxyhexanoyl-[ACP] methyl ester + H2O = 6-carboxyhexanoyl-[ACP] + methanol + H(+). Its pathway is cofactor biosynthesis; biotin biosynthesis. In terms of biological role, the physiological role of BioH is to remove the methyl group introduced by BioC when the pimeloyl moiety is complete. It allows to synthesize pimeloyl-ACP via the fatty acid synthetic pathway through the hydrolysis of the ester bonds of pimeloyl-ACP esters. The polypeptide is Pimeloyl-[acyl-carrier protein] methyl ester esterase (Shigella flexneri).